Here is a 380-residue protein sequence, read N- to C-terminus: Cytochrome b (380 aa).

The next 4 membrane-spanning stretches (helical) occupy residues 33–53 (FGSLLGLCLIIQILTGLFLAM), 77–98 (WLIRYMHANGASMFFICLFLHV), 113–133 (WNMGIILLFAVMATAFMGYVL), and 178–198 (FFAFHFILPFIITALVLVHLL). Residues H83 and H97 each coordinate heme b. The heme b site is built by H182 and H196. Residue H201 participates in a ubiquinone binding. Transmembrane regions (helical) follow at residues 226–246 (IKDFLGVLVLLMAFMILVLFF), 288–308 (LGGVLALILSILILALMPLLH), 320–340 (ITQTMYWILVADLLILTWIGG), and 347–367 (FIMIGQAASIAYFAIIVIFMP).

This sequence belongs to the cytochrome b family. The cytochrome bc1 complex contains 11 subunits: 3 respiratory subunits (MT-CYB, CYC1 and UQCRFS1), 2 core proteins (UQCRC1 and UQCRC2) and 6 low-molecular weight proteins (UQCRH/QCR6, UQCRB/QCR7, UQCRQ/QCR8, UQCR10/QCR9, UQCR11/QCR10 and a cleavage product of UQCRFS1). This cytochrome bc1 complex then forms a dimer. The cofactor is heme b.

It localises to the mitochondrion inner membrane. Functionally, component of the ubiquinol-cytochrome c reductase complex (complex III or cytochrome b-c1 complex) that is part of the mitochondrial respiratory chain. The b-c1 complex mediates electron transfer from ubiquinol to cytochrome c. Contributes to the generation of a proton gradient across the mitochondrial membrane that is then used for ATP synthesis. The protein is Cytochrome b (MT-CYB) of Chionomys roberti (Robert's snow vole).